The primary structure comprises 267 residues: Acetyl-coenzyme A carboxylase carboxyl transferase subunit beta 1 (267 aa).

The CoA carboxyltransferase N-terminal domain maps to 9 to 267; it reads TWQACPKCGR…NYGIGRSAHG (259 aa). The Zn(2+) site is built by cysteine 13, cysteine 16, cysteine 31, and cysteine 34. The C4-type zinc-finger motif lies at 13–34; sequence CPKCGRHVHQRQWGTYQQCPYC.

Belongs to the AccD/PCCB family. Acetyl-CoA carboxylase is a heterohexamer composed of biotin carboxyl carrier protein (AccB), biotin carboxylase (AccC) and two subunits each of ACCase subunit alpha (AccA) and ACCase subunit beta (AccD). Zn(2+) is required as a cofactor.

It localises to the cytoplasm. It carries out the reaction N(6)-carboxybiotinyl-L-lysyl-[protein] + acetyl-CoA = N(6)-biotinyl-L-lysyl-[protein] + malonyl-CoA. Its pathway is lipid metabolism; malonyl-CoA biosynthesis; malonyl-CoA from acetyl-CoA: step 1/1. In terms of biological role, component of the acetyl coenzyme A carboxylase (ACC) complex. Biotin carboxylase (BC) catalyzes the carboxylation of biotin on its carrier protein (BCCP) and then the CO(2) group is transferred by the transcarboxylase to acetyl-CoA to form malonyl-CoA. This is Acetyl-coenzyme A carboxylase carboxyl transferase subunit beta 1 from Lactiplantibacillus plantarum (strain ATCC BAA-793 / NCIMB 8826 / WCFS1) (Lactobacillus plantarum).